A 37-amino-acid polypeptide reads, in one-letter code: Cytochrome b6-f complex subunit 5 (37 aa).

Residues leucine 5–alanine 25 traverse the membrane as a helical segment.

This sequence belongs to the PetG family. As to quaternary structure, the 4 large subunits of the cytochrome b6-f complex are cytochrome b6, subunit IV (17 kDa polypeptide, PetD), cytochrome f and the Rieske protein, while the 4 small subunits are PetG, PetL, PetM and PetN. The complex functions as a dimer.

It is found in the plastid. The protein resides in the chloroplast thylakoid membrane. In terms of biological role, component of the cytochrome b6-f complex, which mediates electron transfer between photosystem II (PSII) and photosystem I (PSI), cyclic electron flow around PSI, and state transitions. PetG is required for either the stability or assembly of the cytochrome b6-f complex. This is Cytochrome b6-f complex subunit 5 from Chaetosphaeridium globosum (Charophycean green alga).